The chain runs to 103 residues: N(4)-acetylcytidine amidohydrolase (103 aa).

The 95-residue stretch at isoleucine 6–phenylalanine 100 folds into the ASCH domain. Lysine 21 (proton acceptor) is an active-site residue. Threonine 24 functions as the Nucleophile in the catalytic mechanism. The Proton donor role is filled by glutamate 74.

The protein belongs to the N(4)-acetylcytidine amidohydrolase family.

The enzyme catalyses N(4)-acetylcytidine + H2O = cytidine + acetate + H(+). The catalysed reaction is N(4)-acetyl-2'-deoxycytidine + H2O = 2'-deoxycytidine + acetate + H(+). It carries out the reaction N(4)-acetylcytosine + H2O = cytosine + acetate + H(+). Catalyzes the hydrolysis of N(4)-acetylcytidine (ac4C). This Klebsiella pneumoniae (strain 342) protein is N(4)-acetylcytidine amidohydrolase.